The following is a 1997-amino-acid chain: Receptor-type tyrosine-protein phosphatase beta (1997 aa).

An N-terminal signal peptide occupies residues Met1–Ala22. 17 Fibronectin type-III domains span residues Glu23–Leu111, Pro112–Lys207, Pro203–Ala288, Glu291–Asp378, Lys379–Leu471, Pro467–Thr552, Gln556–Thr641, Val642–Thr729, Val730–Asn829, Pro819–Val906, Ala909–Val1001, Pro995–Thr1083, Ala1087–Ser1175, Pro1173–Ala1260, Ala1260–Asp1356, Lys1357–Pro1448, and Asn1458–Ser1554. Over Glu23–Glu1621 the chain is Extracellular. N-linked (GlcNAc...) asparagine glycosylation is found at Asn28, Asn53, Asn75, Asn172, Asn198, Asn267, Asn321, Asn414, Asn421, Asn479, Asn544, Asn574, Asn598, Asn652, Asn721, and Asn829. N-linked (GlcNAc...) asparagine glycans are attached at residues Asn1040, Asn1096, Asn1163, Asn1185, Asn1212, Asn1274, Asn1367, Asn1470, Asn1474, and Asn1518. A helical transmembrane segment spans residues Gly1622 to Cys1642. At Arg1643–His1997 the chain is on the cytoplasmic side. One can recognise a Tyrosine-protein phosphatase domain in the interval Leu1703–Val1963. Residues Asp1870, Cys1904–Arg1910, and Gln1948 contribute to the substrate site. The Phosphocysteine intermediate role is filled by Cys1904. A Phosphotyrosine modification is found at Tyr1981.

The protein belongs to the protein-tyrosine phosphatase family. Receptor class 3 subfamily. As to quaternary structure, monomer. Interacts with TEK. Interacts via fibronectin type-III 17 domain with CDH5. Detected in a complex with CNTN1 and NRCAM. Interacts (phosphorylated form) with FYN and GRB2. Interacts with IGFBP2.

The protein resides in the membrane. The enzyme catalyses O-phospho-L-tyrosyl-[protein] + H2O = L-tyrosyl-[protein] + phosphate. Plays an important role in blood vessel remodeling and angiogenesis. Not necessary for the initial formation of blood vessels, but is essential for their maintenance and remodeling. Can induce dephosphorylation of TEK/TIE2, CDH5/VE-cadherin and KDR/VEGFR-2. Regulates angiopoietin-TIE2 signaling in endothelial cells. Acts as a negative regulator of TIE2, and controls TIE2 driven endothelial cell proliferation, which in turn affects blood vessel remodeling during embryonic development and determines blood vessel size during perinatal growth. Essential for the maintenance of endothelial cell contact integrity and for the adhesive function of VE-cadherin in endothelial cells and this requires the presence of plakoglobin. The protein is Receptor-type tyrosine-protein phosphatase beta (PTPRB) of Homo sapiens (Human).